The primary structure comprises 292 residues: Nitrogenase iron protein 1 (292 aa).

12–19 (GKGGIGKS) is a binding site for ATP. Residue C101 coordinates [4Fe-4S] cluster. R104 is modified (ADP-ribosylarginine; by dinitrogenase reductase ADP-ribosyltransferase). C135 lines the [4Fe-4S] cluster pocket.

This sequence belongs to the NifH/BchL/ChlL family. As to quaternary structure, homodimer. It depends on [4Fe-4S] cluster as a cofactor. In terms of processing, the reversible ADP-ribosylation of Arg-104 inactivates the nitrogenase reductase and regulates nitrogenase activity.

It carries out the reaction N2 + 8 reduced [2Fe-2S]-[ferredoxin] + 16 ATP + 16 H2O = H2 + 8 oxidized [2Fe-2S]-[ferredoxin] + 2 NH4(+) + 16 ADP + 16 phosphate + 6 H(+). Functionally, the key enzymatic reactions in nitrogen fixation are catalyzed by the nitrogenase complex, which has 2 components: the iron protein and the molybdenum-iron protein. This is Nitrogenase iron protein 1 (nifH1) from Paenibacillus durus (Paenibacillus azotofixans).